The chain runs to 491 residues: Argininosuccinate lyase (491 aa).

The protein belongs to the lyase 1 family. Argininosuccinate lyase subfamily.

It is found in the cytoplasm. The enzyme catalyses 2-(N(omega)-L-arginino)succinate = fumarate + L-arginine. The protein operates within amino-acid biosynthesis; L-arginine biosynthesis; L-arginine from L-ornithine and carbamoyl phosphate: step 3/3. This Methanosarcina acetivorans (strain ATCC 35395 / DSM 2834 / JCM 12185 / C2A) protein is Argininosuccinate lyase.